The chain runs to 480 residues: UDP-N-acetylmuramate--L-alanine ligase (480 aa).

Residue 126–132 (GTHGKTT) participates in ATP binding.

The protein belongs to the MurCDEF family.

The protein localises to the cytoplasm. The enzyme catalyses UDP-N-acetyl-alpha-D-muramate + L-alanine + ATP = UDP-N-acetyl-alpha-D-muramoyl-L-alanine + ADP + phosphate + H(+). It participates in cell wall biogenesis; peptidoglycan biosynthesis. Cell wall formation. The protein is UDP-N-acetylmuramate--L-alanine ligase of Blochmanniella pennsylvanica (strain BPEN).